Here is a 465-residue protein sequence, read N- to C-terminus: Putative mannose-1-phosphate guanylyltransferase (465 aa).

The protein belongs to the mannose-6-phosphate isomerase type 2 family.

It carries out the reaction alpha-D-mannose 1-phosphate + GTP + H(+) = GDP-alpha-D-mannose + diphosphate. The protein operates within nucleotide-sugar biosynthesis; GDP-alpha-D-mannose biosynthesis; GDP-alpha-D-mannose from alpha-D-mannose 1-phosphate (GTP route): step 1/1. Its pathway is bacterial outer membrane biogenesis; LPS O-antigen biosynthesis. In Vibrio cholerae serotype O1 (strain ATCC 39315 / El Tor Inaba N16961), this protein is Putative mannose-1-phosphate guanylyltransferase (rfbA).